We begin with the raw amino-acid sequence, 60 residues long: UPF0434 protein ESA_02427 (60 aa).

The protein belongs to the UPF0434 family.

The polypeptide is UPF0434 protein ESA_02427 (Cronobacter sakazakii (strain ATCC BAA-894) (Enterobacter sakazakii)).